The sequence spans 396 residues: Endo-1,4-beta-xylanase A (396 aa).

The first 28 residues, 1–28, serve as a signal peptide directing secretion; the sequence is MITLFRKPFVAGLAISLLVGGGIGNVAA. One can recognise a GH10 domain in the interval 51–396; it reads AWQVASLSER…VKPAYWRIID (346 aa). The Proton donor role is filled by Glu195. The active-site Nucleophile is the Glu301.

Belongs to the glycosyl hydrolase 10 (cellulase F) family.

It localises to the secreted. It carries out the reaction Endohydrolysis of (1-&gt;4)-beta-D-xylosidic linkages in xylans.. It functions in the pathway glycan degradation; xylan degradation. This chain is Endo-1,4-beta-xylanase A (xynA), found in Halalkalibacterium halodurans (strain ATCC BAA-125 / DSM 18197 / FERM 7344 / JCM 9153 / C-125) (Bacillus halodurans).